The sequence spans 299 residues: GTPase Era (299 aa).

The Era-type G domain occupies 5–175; it reads RSGFVCLVGR…IDVLAAALPP (171 aa). The segment at 13 to 20 is G1; it reads GRPNTGKS. 13 to 20 is a binding site for GTP; it reads GRPNTGKS. The G2 stretch occupies residues 39-43; the sequence is QTTRH. Residues 60–63 form a G3 region; the sequence is DTPG. GTP is bound by residues 60–64 and 124–127; these read DTPGL and TKID. The segment at 124–127 is G4; sequence TKID. The interval 154–156 is G5; sequence VSA. The 80-residue stretch at 206–285 folds into the KH type-2 domain; it reads VRDELPHSLA…YLDLRVKVAK (80 aa).

Belongs to the TRAFAC class TrmE-Era-EngA-EngB-Septin-like GTPase superfamily. Era GTPase family. In terms of assembly, monomer.

The protein resides in the cell envelope. The protein localises to the secreted. Its subcellular location is the cell wall. Functionally, exhibits GTPase activity. Binds RNA but is probably not involved in ribosome assembly in mycobacteria. The polypeptide is GTPase Era (Mycolicibacterium paratuberculosis (strain ATCC BAA-968 / K-10) (Mycobacterium paratuberculosis)).